The sequence spans 211 residues: MSTDLRTHVLSEHHVSRETAASLDLYVAQLTRWQTVKNLVGPATLKEVWHRHIADALQLLTVAPEATRWLDLGSGAGIPGLILALAGKERPGFHVGLVESNARKCAFLSETARLTGAPVTVHNARIEAVIGTLTDTEIVCARALAPLSQLLAWTEPLLTSGTIGLFPKGRDAATELTEAEDEWTFTRDLIPSRTDSQARIVRVTSLSRVDP.

S-adenosyl-L-methionine is bound by residues G73, 126-127, and R142; that span reads IE.

The protein belongs to the methyltransferase superfamily. RNA methyltransferase RsmG family.

The protein localises to the cytoplasm. The enzyme catalyses guanosine(527) in 16S rRNA + S-adenosyl-L-methionine = N(7)-methylguanosine(527) in 16S rRNA + S-adenosyl-L-homocysteine. Specifically methylates the N7 position of guanine in position 527 of 16S rRNA. The protein is Ribosomal RNA small subunit methyltransferase G of Methylorubrum extorquens (strain PA1) (Methylobacterium extorquens).